The chain runs to 547 residues: Glucose-6-phosphate isomerase 2 (547 aa).

The active-site Proton donor is the Glu351. Active-site residues include His382 and Lys508.

The protein belongs to the GPI family.

It is found in the cytoplasm. The catalysed reaction is alpha-D-glucose 6-phosphate = beta-D-fructose 6-phosphate. It functions in the pathway carbohydrate biosynthesis; gluconeogenesis. The protein operates within carbohydrate degradation; glycolysis; D-glyceraldehyde 3-phosphate and glycerone phosphate from D-glucose: step 2/4. Its function is as follows. Catalyzes the reversible isomerization of glucose-6-phosphate to fructose-6-phosphate. The sequence is that of Glucose-6-phosphate isomerase 2 from Neisseria meningitidis serogroup A / serotype 4A (strain DSM 15465 / Z2491).